The chain runs to 1357 residues: DNA-directed RNA polymerase subunit beta (1357 aa).

This sequence belongs to the RNA polymerase beta chain family. In terms of assembly, the RNAP catalytic core consists of 2 alpha, 1 beta, 1 beta' and 1 omega subunit. When a sigma factor is associated with the core the holoenzyme is formed, which can initiate transcription.

It catalyses the reaction RNA(n) + a ribonucleoside 5'-triphosphate = RNA(n+1) + diphosphate. Functionally, DNA-dependent RNA polymerase catalyzes the transcription of DNA into RNA using the four ribonucleoside triphosphates as substrates. The chain is DNA-directed RNA polymerase subunit beta from Pseudomonas savastanoi pv. phaseolicola (strain 1448A / Race 6) (Pseudomonas syringae pv. phaseolicola (strain 1448A / Race 6)).